A 1410-amino-acid polypeptide reads, in one-letter code: Condensin-1 complex subunit CAP-D2 (1410 aa).

Positions 469–480 are enriched in basic and acidic residues; it reads LEPTEHASKEST. Disordered stretches follow at residues 469-492, 504-525, 860-879, and 1208-1410; these read LEPT…DGEI, HQDS…EKDV, KTKK…NLEA, and KEQE…GSRS. The segment covering 869–879 has biased composition (polar residues); sequence ESQNTEENLEA. The span at 1208 to 1226 shows a compositional bias: basic and acidic residues; it reads KEQEETARNAEVHREKTKT. Acidic residues-rich tracts occupy residues 1240 to 1284 and 1306 to 1319; these read PVEE…EEPD and IETE…DSEP. The span at 1323-1339 shows a compositional bias: polar residues; it reads QCGTTNPRSLNRKTSGD. Over residues 1342 to 1365 the composition is skewed to acidic residues; it reads IETESEEEQSDSEEEPSDSEEEPD. The span at 1368–1379 shows a compositional bias: polar residues; the sequence is QCGTTNPRSLNQ.

The protein belongs to the CND1 (condensin subunit 1) family. In terms of assembly, component of the condensin complex. In terms of tissue distribution, present in buds.

Its subcellular location is the chromosome. It is found in the nucleus. Essential protein. Regulatory subunit of the condensin complex, a complex required for conversion of interphase chromatin into mitotic-like condense chromosomes. The condensin complex probably introduces positive supercoils into relaxed DNA in the presence of type I topoisomerases and converts nicked DNA into positive knotted forms in the presence of type II topoisomerases. Required for fertility, growth and euchromatin organization, but not for sister chromatid cohesion. Necessary to maintain normal structural integrity of the meiotic chromosomes during the two nuclear divisions of gametogenesis, especially to maintain compaction of the centromeric repeats and 45S rDNA. Also seems to be involved in crossover formation during meiotic prophase I. Prevents centromeric and pericentromeric heterochromatin repeats association. Contributes to the induction of stress-responsive genes in response to stress treatment. This is Condensin-1 complex subunit CAP-D2 from Arabidopsis thaliana (Mouse-ear cress).